The chain runs to 425 residues: SWI5-dependent HO expression protein 3 (425 aa).

The disordered stretch occupies residues 24–45; it reads NLESSPTKDRNTSSQNASSSRV. Positions 35 to 45 are enriched in polar residues; sequence TSSQNASSSRV. Positions 68-197 form a coiled coil; sequence QNLLSKLELA…LELSNQNLNY (130 aa). The disordered stretch occupies residues 322–425; sequence RKTPNTNDSS…NSMVVHGAQS (104 aa). Residues 326 to 338 show a composition bias toward low complexity; that stretch reads NTNDSSSNGNSSN. The residue at position 343 (S343) is a Phosphoserine. 2 stretches are compositionally biased toward polar residues: residues 345-358 and 382-397; these read YTAS…SIPK and KTNV…SPTI. S394 is modified (phosphoserine).

It belongs to the SHE3 family. Interacts with SHE2 and MYO4.

Its subcellular location is the endoplasmic reticulum membrane. Functionally, RNA-binding protein that binds specific mRNAs including the ASH1 mRNA, coding for a repressor of the HO endonuclease. Part of the mRNA localization machinery that restricts accumulation of certain proteins to the bud and in the daughter cell. Required for the delivery of cortical endoplasmic reticulum into the emerging bud. The polypeptide is SWI5-dependent HO expression protein 3 (SHE3) (Saccharomyces cerevisiae (strain ATCC 204508 / S288c) (Baker's yeast)).